A 168-amino-acid chain; its full sequence is DNA-binding protein inhibitor ID-1 (168 aa).

The bHLH domain maps to 46-98 (LPALLDEQQVNVLLYDMNGCYSRLKELVPTLPQNRKVSKVEILQHVIDYIRDL). Residues 53–106 (QQVNVLLYDMNGCYSRLKELVPTLPQNRKVSKVEILQHVIDYIRDLQLELNSES) are interaction with IFI204. The short motif at 91-104 (VIDYIRDLQLELNS) is the Nuclear export signal element.

Heterodimer with other HLH proteins. Interacts with CLOCK and BMAL1. Interacts with COPS5, IFI204, GATA4 and NKX2-5. Post-translationally, polyubiquitinated; which is favored by Ifi204 and leads to proteasomal degradation.

The protein resides in the cytoplasm. It is found in the nucleus. Functionally, transcriptional regulator (lacking a basic DNA binding domain) which negatively regulates the basic helix-loop-helix (bHLH) transcription factors by forming heterodimers and inhibiting their DNA binding and transcriptional activity. Implicated in regulating a variety of cellular processes, including cellular growth, senescence, differentiation, apoptosis, angiogenesis, and neoplastic transformation. Inhibits skeletal muscle and cardiac myocyte differentiation. Regulates the circadian clock by repressing the transcriptional activator activity of the CLOCK-BMAL1 heterodimer. The protein is DNA-binding protein inhibitor ID-1 (Id1) of Mus musculus (Mouse).